The primary structure comprises 447 residues: Tubulin beta chain (447 aa).

The GTP site is built by Gln11, Glu69, Ser138, Gly142, Thr143, Gly144, Asn204, and Asn226. Glu69 serves as a coordination point for Mg(2+). The tract at residues 424 to 447 (QYQEARSTDSDEYDNEEYYNQQEE) is disordered. The segment covering 433-447 (SDEYDNEEYYNQQEE) has biased composition (acidic residues).

This sequence belongs to the tubulin family. As to quaternary structure, dimer of alpha and beta chains. A typical microtubule is a hollow water-filled tube with an outer diameter of 25 nm and an inner diameter of 15 nM. Alpha-beta heterodimers associate head-to-tail to form protofilaments running lengthwise along the microtubule wall with the beta-tubulin subunit facing the microtubule plus end conferring a structural polarity. Microtubules usually have 13 protofilaments but different protofilament numbers can be found in some organisms and specialized cells. It depends on Mg(2+) as a cofactor. Lens specific.

The protein localises to the cytoplasm. The protein resides in the cytoskeleton. Tubulin is the major constituent of microtubules, a cylinder consisting of laterally associated linear protofilaments composed of alpha- and beta-tubulin heterodimers. Microtubules grow by the addition of GTP-tubulin dimers to the microtubule end, where a stabilizing cap forms. Below the cap, tubulin dimers are in GDP-bound state, owing to GTPase activity of alpha-tubulin. The sequence is that of Tubulin beta chain from Enteroctopus dofleini (North Pacific giant octopus).